A 2234-amino-acid polypeptide reads, in one-letter code: Bridge-like lipid transfer protein family member 2 (2234 aa).

The N-terminal stretch at 1 to 31 (MPLFLSALLVLLLVALSALFLGRWLVVRLAT) is a signal peptide. The transmembrane domain stretch occupies residues 29–108 (LATRWCQRKL…LQKVSSLSAP (80 aa)). Ser-563 carries the phosphoserine modification. A disordered region spans residues 1496-1529 (QMSAKKPKRGIPPSAQVPPHVSTPSFSGRPDKGS). The stretch at 1814-1885 (ILHLQEAVRQ…LNILIRCFKD (72 aa)) forms a coiled coil. A phosphoserine mark is found at Ser-1846 and Ser-2090.

The protein belongs to the SABRE family.

The protein localises to the cell membrane. It localises to the endoplasmic reticulum membrane. The protein resides in the mitochondrion membrane. Tube-forming lipid transport protein which binds to phosphatidylinositols and affects phosphatidylinositol-4,5-bisphosphate (PtdIns-4,5-P2) distribution. This chain is Bridge-like lipid transfer protein family member 2 (Bltp2), found in Mus musculus (Mouse).